A 209-amino-acid chain; its full sequence is Large ribosomal subunit protein bL25 (209 aa).

The protein belongs to the bacterial ribosomal protein bL25 family. CTC subfamily. Part of the 50S ribosomal subunit; part of the 5S rRNA/L5/L18/L25 subcomplex. Contacts the 5S rRNA. Binds to the 5S rRNA independently of L5 and L18.

Functionally, this is one of the proteins that binds to the 5S RNA in the ribosome where it forms part of the central protuberance. The protein is Large ribosomal subunit protein bL25 of Xanthomonas campestris pv. campestris (strain B100).